The chain runs to 483 residues: UDP-N-acetylmuramate--L-alanine ligase (483 aa).

An ATP-binding site is contributed by 112–118; that stretch reads GTHGKTT.

It belongs to the MurCDEF family.

The protein localises to the cytoplasm. The enzyme catalyses UDP-N-acetyl-alpha-D-muramate + L-alanine + ATP = UDP-N-acetyl-alpha-D-muramoyl-L-alanine + ADP + phosphate + H(+). Its pathway is cell wall biogenesis; peptidoglycan biosynthesis. Its function is as follows. Cell wall formation. The chain is UDP-N-acetylmuramate--L-alanine ligase from Ralstonia pickettii (strain 12J).